The primary structure comprises 622 residues: Phosphomethylpyrimidine synthase (622 aa).

A disordered region spans residues 109-130 (EPISNNNNDRQSSDKQLSFTTN). Substrate is bound by residues Asn-234, Met-263, Tyr-292, His-328, 348–350 (SRG), 389–392 (DGLR), and Glu-428. His-432 provides a ligand contact to Zn(2+). Tyr-455 is a substrate binding site. His-496 provides a ligand contact to Zn(2+). Cys-576, Cys-579, and Cys-584 together coordinate [4Fe-4S] cluster.

It belongs to the ThiC family. As to quaternary structure, homodimer. It depends on [4Fe-4S] cluster as a cofactor.

The catalysed reaction is 5-amino-1-(5-phospho-beta-D-ribosyl)imidazole + S-adenosyl-L-methionine = 4-amino-2-methyl-5-(phosphooxymethyl)pyrimidine + CO + 5'-deoxyadenosine + formate + L-methionine + 3 H(+). Its pathway is cofactor biosynthesis; thiamine diphosphate biosynthesis. Functionally, catalyzes the synthesis of the hydroxymethylpyrimidine phosphate (HMP-P) moiety of thiamine from aminoimidazole ribotide (AIR) in a radical S-adenosyl-L-methionine (SAM)-dependent reaction. In Baumannia cicadellinicola subsp. Homalodisca coagulata, this protein is Phosphomethylpyrimidine synthase.